Reading from the N-terminus, the 105-residue chain is Cysteine-rich venom protein VAR2 (105 aa).

Residues 1 to 22 form the signal peptide; that stretch reads MILLKLYLTLAAILCQSRGTTS.

It belongs to the CRISP family. In terms of processing, contains 8 disulfide bonds. As to expression, expressed by the venom gland.

It localises to the secreted. Blocks ryanodine receptors, and potassium channels. The protein is Cysteine-rich venom protein VAR2 of Varanus acanthurus (Ridge-tailed monitor).